Here is a 445-residue protein sequence, read N- to C-terminus: Ribosomal protein uS12 methylthiotransferase RimO (445 aa).

The region spanning 4–119 (YKVGMVSLGC…INEAIMNFIN (116 aa)) is the MTTase N-terminal domain. 6 residues coordinate [4Fe-4S] cluster: cysteine 13, cysteine 48, cysteine 82, cysteine 157, cysteine 161, and cysteine 164. Residues 143-373 (TTDKATAYLR…MLLQKELSEE (231 aa)) form the Radical SAM core domain. Positions 376–441 (KNKLGREYDV…EYDLVGVVCN (66 aa)) constitute a TRAM domain.

Belongs to the methylthiotransferase family. RimO subfamily. It depends on [4Fe-4S] cluster as a cofactor.

It localises to the cytoplasm. The catalysed reaction is L-aspartate(89)-[ribosomal protein uS12]-hydrogen + (sulfur carrier)-SH + AH2 + 2 S-adenosyl-L-methionine = 3-methylsulfanyl-L-aspartate(89)-[ribosomal protein uS12]-hydrogen + (sulfur carrier)-H + 5'-deoxyadenosine + L-methionine + A + S-adenosyl-L-homocysteine + 2 H(+). Catalyzes the methylthiolation of an aspartic acid residue of ribosomal protein uS12. This chain is Ribosomal protein uS12 methylthiotransferase RimO, found in Clostridium perfringens (strain SM101 / Type A).